Consider the following 203-residue polypeptide: GTP cyclohydrolase 1 (203 aa).

3 residues coordinate Zn(2+): C87, H90, and C158.

Belongs to the GTP cyclohydrolase I family. As to quaternary structure, homomer.

The catalysed reaction is GTP + H2O = 7,8-dihydroneopterin 3'-triphosphate + formate + H(+). The protein operates within cofactor biosynthesis; 7,8-dihydroneopterin triphosphate biosynthesis; 7,8-dihydroneopterin triphosphate from GTP: step 1/1. This chain is GTP cyclohydrolase 1, found in Xylella fastidiosa (strain M23).